We begin with the raw amino-acid sequence, 185 residues long: Translation initiation factor IF-3 (185 aa).

This sequence belongs to the IF-3 family. As to quaternary structure, monomer.

The protein localises to the cytoplasm. Functionally, IF-3 binds to the 30S ribosomal subunit and shifts the equilibrium between 70S ribosomes and their 50S and 30S subunits in favor of the free subunits, thus enhancing the availability of 30S subunits on which protein synthesis initiation begins. The polypeptide is Translation initiation factor IF-3 (Streptococcus pneumoniae serotype 19F (strain G54)).